The sequence spans 205 residues: Protein N-terminal glutamine amidohydrolase (205 aa).

Active-site residues include cysteine 20, histidine 74, and aspartate 90.

Belongs to the NTAQ1 family. Monomer.

The enzyme catalyses N-terminal L-glutaminyl-[protein] + H2O = N-terminal L-glutamyl-[protein] + NH4(+). Its function is as follows. Mediates the side-chain deamidation of N-terminal glutamine residues to glutamate, an important step in N-end rule pathway of protein degradation. Conversion of the resulting N-terminal glutamine to glutamate renders the protein susceptible to arginylation, polyubiquitination and degradation as specified by the N-end rule. Does not act on substrates with internal or C-terminal glutamine and does not act on non-glutamine residues in any position. The polypeptide is Protein N-terminal glutamine amidohydrolase (tun) (Drosophila virilis (Fruit fly)).